The following is a 75-amino-acid chain: Protein Tlp homolog (75 aa).

The disordered stretch occupies residues 53–75 (REALDGMREEIKDEARDKKNGYM).

The protein belongs to the Tlp family.

This chain is Protein Tlp homolog, found in Clostridium botulinum (strain Langeland / NCTC 10281 / Type F).